The chain runs to 114 residues: Replication initiation control protein YabA (114 aa).

Positions 79, 81, 95, and 98 each coordinate Zn(2+).

It belongs to the YabA family. As to quaternary structure, homotetramer. Interacts with both DnaA and DnaN, acting as a bridge between these two proteins. Zn(2+) serves as cofactor.

It localises to the cytoplasm. The protein resides in the nucleoid. Functionally, involved in control of chromosome replication initiation. Inhibits the cooperative binding of DnaA to the oriC region, thus negatively regulating initiation of chromosome replication. Inhibits the ability of DnaA-ATP to form a helix on DNA; does not disassemble preformed DnaA-DNA helices. Decreases the residence time of DnaA on the chromosome at its binding sites (oriC, replication forks and promoter-binding sites). Tethers DnaA to the replication machinery via the DNA polymerase beta sliding clamp subunit (dnaN). Associates with oriC and other DnaA targets on the chromosome in a DnaA-dependent manner. The protein is Replication initiation control protein YabA of Lactobacillus johnsonii (strain CNCM I-12250 / La1 / NCC 533).